A 212-amino-acid chain; its full sequence is Uracil phosphoribosyltransferase (212 aa).

5-phospho-alpha-D-ribose 1-diphosphate contacts are provided by residues Arg78, Arg103, and 130–138 (DPMLATGSS). Uracil-binding positions include Ile193 and 198–200 (GDA). A 5-phospho-alpha-D-ribose 1-diphosphate-binding site is contributed by Asp199.

Belongs to the UPRTase family. Mg(2+) is required as a cofactor.

It carries out the reaction UMP + diphosphate = 5-phospho-alpha-D-ribose 1-diphosphate + uracil. It functions in the pathway pyrimidine metabolism; UMP biosynthesis via salvage pathway; UMP from uracil: step 1/1. With respect to regulation, allosterically activated by GTP. Catalyzes the conversion of uracil and 5-phospho-alpha-D-ribose 1-diphosphate (PRPP) to UMP and diphosphate. The polypeptide is Uracil phosphoribosyltransferase (Pseudomonas savastanoi pv. phaseolicola (strain 1448A / Race 6) (Pseudomonas syringae pv. phaseolicola (strain 1448A / Race 6))).